We begin with the raw amino-acid sequence, 97 residues long: Small ribosomal subunit protein bS6 (97 aa).

The protein belongs to the bacterial ribosomal protein bS6 family.

In terms of biological role, binds together with bS18 to 16S ribosomal RNA. The polypeptide is Small ribosomal subunit protein bS6 (Bifidobacterium longum (strain NCC 2705)).